The primary structure comprises 586 residues: Probable zinc metalloprotease EGY3, chloroplastic (586 aa).

The N-terminal 54 residues, 1–54 (MSSSSLVTSLLFSSSSSSNTATSTSSRRSFSLFSKNQYCKPSPLRRSSSLLLVR), are a transit peptide targeting the chloroplast. Residues 62–73 (EEKAAPAAESHH) show a composition bias toward basic and acidic residues. Residues 62–118 (EEKAAPAAESHHAGGGQDDAATASHHAVEGENGVADADGGGVKKSKEELEEEEQQEV) form a disordered region. The stretch at 103–195 (VKKSKEELEE…NTFKALDLNK (93 aa)) forms a coiled coil. A run of 7 helical transmembrane segments spans residues 287 to 307 (LSAV…SGFF), 318 to 338 (VSDV…SEIA), 389 to 409 (ASAY…DGSL), 427 to 447 (PLLS…GNVL), 454 to 474 (VGVP…VTSL), 506 to 526 (VALG…WGLF), and 550 to 570 (YAWG…NGGG).

Belongs to the peptidase M50B family.

It localises to the plastid. Its subcellular location is the chloroplast membrane. Functionally, probable membrane-associated metalloprotease that may be involved in chloroplast development. In Oryza sativa subsp. indica (Rice), this protein is Probable zinc metalloprotease EGY3, chloroplastic (EGY3).